Here is a 223-residue protein sequence, read N- to C-terminus: MGESIAQQRGPFARRLQEYAASIELTLSEQQVNQLLDYLELFEKWNKAYNLSAIRDAEGMFTKHLLDSLSIAPHLTGERFIDVGTGGGLPGIPMAICFPQRHFTLLDSAGKKVRFLFQVKQALGLSNVDTQNRRVETFQPQPQFDGVISRAFASITYMLTWCNHLIHDDGRFWAMKGVMPNSELSELPKKYIVKASHALHVPNLEGERCLIELALAQESNSKA.

S-adenosyl-L-methionine is bound by residues G84, L89, 135 to 136 (VE), and R150.

It belongs to the methyltransferase superfamily. RNA methyltransferase RsmG family.

The protein localises to the cytoplasm. It carries out the reaction guanosine(527) in 16S rRNA + S-adenosyl-L-methionine = N(7)-methylguanosine(527) in 16S rRNA + S-adenosyl-L-homocysteine. Its function is as follows. Specifically methylates the N7 position of guanine in position 527 of 16S rRNA. The sequence is that of Ribosomal RNA small subunit methyltransferase G from Saccharophagus degradans (strain 2-40 / ATCC 43961 / DSM 17024).